The sequence spans 108 residues: ATP synthase epsilon chain (108 aa).

The protein belongs to the ATPase epsilon chain family. F-type ATPases have 2 components, CF(1) - the catalytic core - and CF(0) - the membrane proton channel. CF(1) has five subunits: alpha(3), beta(3), gamma(1), delta(1), epsilon(1). CF(0) has three main subunits: a, b and c.

It localises to the cell inner membrane. Functionally, produces ATP from ADP in the presence of a proton gradient across the membrane. In Rickettsia bellii (strain OSU 85-389), this protein is ATP synthase epsilon chain.